The following is a 368-amino-acid chain: Nuclease EXOG, mitochondrial (368 aa).

Residues 1–41 (MAAKSFASRLRDSRRFLNGFLAGAVVGAAGAGLTALQFFRR) constitute a mitochondrion transit peptide. H140 acts as the Proton acceptor in catalysis. N171 is a binding site for a divalent metal cation.

The protein belongs to the DNA/RNA non-specific endonuclease family. In terms of assembly, homodimer. A divalent metal cation serves as cofactor.

The protein localises to the mitochondrion inner membrane. Endo/exonuclease with nicking activity towards supercoiled DNA, a preference for single-stranded DNA and 5'-3' exonuclease activity. This Mus musculus (Mouse) protein is Nuclease EXOG, mitochondrial (Exog).